The sequence spans 234 residues: UPF0173 metal-dependent hydrolase Atu1317 (234 aa).

It belongs to the UPF0173 family.

The polypeptide is UPF0173 metal-dependent hydrolase Atu1317 (Agrobacterium fabrum (strain C58 / ATCC 33970) (Agrobacterium tumefaciens (strain C58))).